A 281-amino-acid chain; its full sequence is Probable feruloyl esterase A (281 aa).

Positions 1-21 are cleaved as a signal peptide; the sequence is MKNFFSMHAILLACSAGAGLA. 3 disulfides stabilise this stretch: C50/C279, C112/C115, and C248/C255. D98 is a binding site for substrate. N-linked (GlcNAc...) asparagine glycosylation is present at N100. Y101 is a substrate binding site. S154 acts as the Nucleophile in catalysis. N173 is a glycosylation site (N-linked (GlcNAc...) asparagine). The Charge relay system role is filled by D215. H268 contributes to the substrate binding site. H268 functions as the Charge relay system in the catalytic mechanism.

It belongs to the AB hydrolase superfamily. FaeA family.

It localises to the secreted. It carries out the reaction feruloyl-polysaccharide + H2O = ferulate + polysaccharide.. Its function is as follows. Involved in degradation of plant cell walls. Hydrolyzes the feruloyl-arabinose ester bond in arabinoxylans, and the feruloyl-galactose ester bond in pectin. This is Probable feruloyl esterase A (faeA) from Aspergillus oryzae (strain ATCC 42149 / RIB 40) (Yellow koji mold).